We begin with the raw amino-acid sequence, 376 residues long: Lipid-A-disaccharide synthase (376 aa).

This sequence belongs to the LpxB family.

It catalyses the reaction a lipid X + a UDP-2-N,3-O-bis[(3R)-3-hydroxyacyl]-alpha-D-glucosamine = a lipid A disaccharide + UDP + H(+). Its pathway is bacterial outer membrane biogenesis; LPS lipid A biosynthesis. In terms of biological role, condensation of UDP-2,3-diacylglucosamine and 2,3-diacylglucosamine-1-phosphate to form lipid A disaccharide, a precursor of lipid A, a phosphorylated glycolipid that anchors the lipopolysaccharide to the outer membrane of the cell. The polypeptide is Lipid-A-disaccharide synthase (Coxiella burnetii (strain RSA 331 / Henzerling II)).